The following is a 116-amino-acid chain: Orphan antitoxin YagB (116 aa).

This sequence belongs to the CbeA/YafW/YfjZ antitoxin family.

Putative antitoxin component of a type IV toxin-antitoxin (TA) system; its cognate toxin is unknown. This is Orphan antitoxin YagB (yagB) from Escherichia coli (strain K12).